Consider the following 158-residue polypeptide: MPKETGEKLIVQNKKARHDYAIEDKYEAGLALTGTEVKSLREGRASLSEAFISIDRRGEMWLEGANIPEYLNGTWNNHAPKRKRKLLLHRLQITKLARGIEAKGYTIVPLSLYFKDGRVKAEIALARGKKEFDKRQALREEQDKREALRAMRYANMRH.

The protein belongs to the SmpB family.

It localises to the cytoplasm. Its function is as follows. Required for rescue of stalled ribosomes mediated by trans-translation. Binds to transfer-messenger RNA (tmRNA), required for stable association of tmRNA with ribosomes. tmRNA and SmpB together mimic tRNA shape, replacing the anticodon stem-loop with SmpB. tmRNA is encoded by the ssrA gene; the 2 termini fold to resemble tRNA(Ala) and it encodes a 'tag peptide', a short internal open reading frame. During trans-translation Ala-aminoacylated tmRNA acts like a tRNA, entering the A-site of stalled ribosomes, displacing the stalled mRNA. The ribosome then switches to translate the ORF on the tmRNA; the nascent peptide is terminated with the 'tag peptide' encoded by the tmRNA and targeted for degradation. The ribosome is freed to recommence translation, which seems to be the essential function of trans-translation. This chain is SsrA-binding protein, found in Bifidobacterium longum (strain DJO10A).